The chain runs to 524 residues: Lysophospholipid acyltransferase LPCAT4 (524 aa).

Helical transmembrane passes span 40–62 and 87–107; these read CLLG…FLLW and TVCH…LGFL. An HXXXXD motif motif is present at residues 129-134; that stretch reads HSTFFD. The N-linked (GlcNAc...) asparagine glycan is linked to Asn152. The tract at residues 490 to 524 is disordered; sequence PHKPRSTSQIPNASSPSSPTALANGTVQAPKQKGD. Positions 495–518 are enriched in polar residues; it reads STSQIPNASSPSSPTALANGTVQA.

The protein belongs to the 1-acyl-sn-glycerol-3-phosphate acyltransferase family. In terms of tissue distribution, widely expressed with much higher level in brain. Expressed in erythroleukemic cells but not in reticulocytes.

It is found in the endoplasmic reticulum membrane. The catalysed reaction is a 1-acyl-sn-glycero-3-phosphoethanolamine + an acyl-CoA = a 1,2-diacyl-sn-glycero-3-phosphoethanolamine + CoA. It carries out the reaction a 1-O-(1Z-alkenyl)-sn-glycero-3-phosphoethanolamine + an acyl-CoA = a 1-O-(1Z-alkenyl)-2-acyl-sn-glycero-3-phosphoethanolamine + CoA. It catalyses the reaction a 1-acyl-sn-glycero-3-phosphocholine + an acyl-CoA = a 1,2-diacyl-sn-glycero-3-phosphocholine + CoA. The enzyme catalyses a 1-O-alkyl-sn-glycero-3-phosphocholine + acetyl-CoA = a 1-O-alkyl-2-acetyl-sn-glycero-3-phosphocholine + CoA. The catalysed reaction is a 1-acyl-sn-glycero-3-phospho-L-serine + an acyl-CoA = a 1,2-diacyl-sn-glycero-3-phospho-L-serine + CoA. It carries out the reaction octanoyl-CoA + a 1-acyl-sn-glycero-3-phosphoethanolamine = 1-acyl-2-octanoyl-sn-glycero-3-phosphoethanolamine + CoA. It catalyses the reaction a 1-acyl-sn-glycero-3-phosphoethanolamine + hexadecanoyl-CoA = 1-acyl-2-hexadecanoyl-sn-glycero-3-phosphoethanolamine + CoA. The enzyme catalyses a 1-acyl-sn-glycero-3-phosphoethanolamine + octadecanoyl-CoA = 1-acyl-2-octadecanoyl-sn-glycero-3-phosphoethanolamine + CoA. The catalysed reaction is a 1-acyl-sn-glycero-3-phosphoethanolamine + (9Z)-octadecenoyl-CoA = 1-acyl-2-(9Z)-octadecenoyl-sn-glycero-3-phosphoethanolamine + CoA. It carries out the reaction a 1-acyl-sn-glycero-3-phosphoethanolamine + (5Z,8Z,11Z,14Z)-eicosatetraenoyl-CoA = 1-acyl-2-(5Z,8Z,11Z,14Z)-eicosatetraenoyl-sn-glycero-3-phosphoethanolamine + CoA. It catalyses the reaction a 1-O-(1Z-alkenyl)-sn-glycero-3-phosphoethanolamine + octanoyl-CoA = 1-O-(1Z)-alkenyl-2-octanoyl-sn-glycero-3-phosphoethanolamine + CoA. The enzyme catalyses a 1-O-(1Z-alkenyl)-sn-glycero-3-phosphoethanolamine + hexadecanoyl-CoA = 1-O-(1Z)-alkenyl-2-hexadecanoyl-sn-glycero-3-phosphoethanolamine + CoA. The catalysed reaction is a 1-O-(1Z-alkenyl)-sn-glycero-3-phosphoethanolamine + octadecanoyl-CoA = 1-O-(1Z)-alkenyl-2-octadecanoyl-sn-glycero-3-phosphoethanolamine + CoA. It carries out the reaction a 1-O-(1Z-alkenyl)-sn-glycero-3-phosphoethanolamine + (9Z)-octadecenoyl-CoA = 1-O-(1Z)-alkenyl-2-(9Z)-octadecenoyl-sn-glycero-3-phosphoethanolamine + CoA. It catalyses the reaction a 1-O-(1Z-alkenyl)-sn-glycero-3-phosphoethanolamine + (5Z,8Z,11Z,14Z)-eicosatetraenoyl-CoA = 1-O-(1Z)-alkenyl-2-(5Z,8Z,11Z,14Z)-eicosatetraenoyl-sn-glycero-3-phosphoethanolamine + CoA. The enzyme catalyses a 1-acyl-sn-glycero-3-phosphocholine + hexadecanoyl-CoA = 1-acyl-2-hexadecanoyl-sn-glycero-3-phosphocholine + CoA. The catalysed reaction is a 1-acyl-sn-glycero-3-phosphocholine + (9Z)-octadecenoyl-CoA = a 1-acyl-2-(9Z)-octadecenoyl-sn-glycero-3-phosphocholine + CoA. It carries out the reaction 1-O-hexadecyl-sn-glycero-3-phosphocholine + (9Z)-octadecenoyl-CoA = 1-O-hexadecyl-2-(9Z)-octadecenoyl-sn-glycero-3-phosphocholine + CoA. It catalyses the reaction 1-O-hexadecyl-sn-glycero-3-phosphocholine + (5Z,8Z,11Z,14Z)-eicosatetraenoyl-CoA = 1-O-hexadecyl-2-(5Z,8Z,11Z,14Z)-eicosatetraenoyl-sn-glycero-3-phosphocholine + CoA. The enzyme catalyses 1-hexadecanoyl-sn-glycero-3-phospho-L-serine + (9Z)-octadecenoyl-CoA = 1-hexadecanoyl-2-(9Z-octadecenoyl)-sn-glycero-3-phospho-L-serine + CoA. The catalysed reaction is 1-octadecanoyl-sn-glycero-3-phospho-(1'-sn-glycerol) + (9Z)-octadecenoyl-CoA = 1-octadecanoyl-2-(9Z-octadecenoyl)-sn-glycero-3-phospho-(1'-sn-glycerol) + CoA. It carries out the reaction 1-octadecanoyl-sn-glycero-3-phospho-(1'-sn-glycerol) + (5Z,8Z,11Z,14Z)-eicosatetraenoyl-CoA = 1-octadecanoyl-2-(5Z,8Z,11Z,14Z-eicosatetraenoyl)-sn-glycero-3-phospho-(1'-sn-glycerol) + CoA. Its pathway is lipid metabolism; phospholipid metabolism. Its function is as follows. Displays acyl-CoA-dependent lysophospholipid acyltransferase activity with a subset of lysophospholipids as substrates; converts lysophosphatidylethanolamine to phosphatidylethanolamine, 1-alkenyl-lysophatidylethanolamine to 1-alkenyl-phosphatidylethanolamine, lysophosphatidylglycerol and alkyl-lysophosphatidylcholine to phosphatidylglycerol and alkyl-phosphatidylcholine, respectively. In contrast, has no lysophosphatidylinositol, glycerol-3-phosphate, diacylglycerol or lysophosphatidic acid acyltransferase activity. Prefers long chain acyl-CoAs (C16, C18) as acyl donors. Converts lysophosphatidylcholine to phosphatidycholine. This chain is Lysophospholipid acyltransferase LPCAT4 (Lpcat4), found in Mus musculus (Mouse).